Here is a 450-residue protein sequence, read N- to C-terminus: MARLFGTDGVRGVANQDLTAELALDLSVAAAHVLGEAGAFGHRQPTALVARDPRASGEFLEAAVCAGLASAGVDVLRVGVIPTPAAAYLVNEYRTDLGVMLSASHNPMPDNGIKFFSRGGVKLPDDLEDAIEQRMGEPWARPIGDKVGRIRYTPQAVDTYVDHLVRSLRQQDTLKGMKIVLDTANGASFHTATAAFTTQGAEVIAIHDQPDGLNINERCGSTHPEKLQAKVVEVGADMGLAFDGDADRCLAVDHEGNIVDGDHIIAILALALQEDHRLASNTVVATIMSNLGLIIAMRAHDIHVDQTKVGDRYVLESMNANGFSLGGEQSGHVIMSEFATTGDGVLTGLHLAARVARTGKTLKELASVMTRLPQALINVRGVDKLRAGIDPDVNKAVADANQKLGDAGRVVLRPSGTEPVVRVMVEAGTQEEADQICSELAETVKMSLAL.

Ser-104 (phosphoserine intermediate) is an active-site residue. Ser-104, Asp-243, Asp-245, and Asp-247 together coordinate Mg(2+). Position 104 is a phosphoserine (Ser-104).

The protein belongs to the phosphohexose mutase family. Mg(2+) is required as a cofactor. Post-translationally, activated by phosphorylation.

The enzyme catalyses alpha-D-glucosamine 1-phosphate = D-glucosamine 6-phosphate. Functionally, catalyzes the conversion of glucosamine-6-phosphate to glucosamine-1-phosphate. This Cutibacterium acnes (strain DSM 16379 / KPA171202) (Propionibacterium acnes) protein is Phosphoglucosamine mutase.